The sequence spans 349 residues: 3-dehydroquinate synthase (349 aa).

NAD(+) is bound by residues 63-68, 97-101, 121-122, lysine 134, lysine 143, and 161-164; these read DGEEYK, GVIGD, TT, and FLTT. Residues glutamate 176, histidine 235, and histidine 252 each contribute to the Zn(2+) site.

It belongs to the sugar phosphate cyclases superfamily. Dehydroquinate synthase family. It depends on Co(2+) as a cofactor. Requires Zn(2+) as cofactor. NAD(+) serves as cofactor.

The protein localises to the cytoplasm. It catalyses the reaction 7-phospho-2-dehydro-3-deoxy-D-arabino-heptonate = 3-dehydroquinate + phosphate. It participates in metabolic intermediate biosynthesis; chorismate biosynthesis; chorismate from D-erythrose 4-phosphate and phosphoenolpyruvate: step 2/7. Catalyzes the conversion of 3-deoxy-D-arabino-heptulosonate 7-phosphate (DAHP) to dehydroquinate (DHQ). This Sulfurimonas denitrificans (strain ATCC 33889 / DSM 1251) (Thiomicrospira denitrificans (strain ATCC 33889 / DSM 1251)) protein is 3-dehydroquinate synthase.